Here is a 277-residue protein sequence, read N- to C-terminus: Large ribosomal subunit protein uL2 (277 aa).

The segment at 219–277 (TVRGSVMNPNDHPHGGGEGRSPIGHPSPRTPWGKPALGYKTRKNKKYSDRFIVKRRHDK) is disordered.

It belongs to the universal ribosomal protein uL2 family. In terms of assembly, part of the 50S ribosomal subunit. Forms a bridge to the 30S subunit in the 70S ribosome.

One of the primary rRNA binding proteins. Required for association of the 30S and 50S subunits to form the 70S ribosome, for tRNA binding and peptide bond formation. It has been suggested to have peptidyltransferase activity; this is somewhat controversial. Makes several contacts with the 16S rRNA in the 70S ribosome. The chain is Large ribosomal subunit protein uL2 from Clostridium botulinum (strain ATCC 19397 / Type A).